A 468-amino-acid polypeptide reads, in one-letter code: Adenosylhomocysteinase (468 aa).

Thr57, Asp132, and Glu194 together coordinate substrate. Thr195–Thr197 serves as a coordination point for NAD(+). Residues Lys224 and Asp228 each coordinate substrate. Residues Asn229, Gly258–Gly263, Glu281, Asn316, Ile337–His339, and Asn382 contribute to the NAD(+) site.

Belongs to the adenosylhomocysteinase family. Requires NAD(+) as cofactor.

The protein resides in the cytoplasm. It carries out the reaction S-adenosyl-L-homocysteine + H2O = L-homocysteine + adenosine. It functions in the pathway amino-acid biosynthesis; L-homocysteine biosynthesis; L-homocysteine from S-adenosyl-L-homocysteine: step 1/1. In terms of biological role, may play a key role in the regulation of the intracellular concentration of adenosylhomocysteine. In Methylorubrum extorquens (strain CM4 / NCIMB 13688) (Methylobacterium extorquens), this protein is Adenosylhomocysteinase.